Here is a 152-residue protein sequence, read N- to C-terminus: MKFTTPISLISLFVSSALAAPTPENEARDAIPVSVSYDPRYDNAGTSMNDVSCSNGVNGLVTKWPTFGSVPGFARIGGAPTIPGWNSPNCGKCYKLQYEQNTIYVTAIDAAPGGFNIATSAMDQLTNGMAVELGRVQATYEEADPSHCASGV.

The first 19 residues, 1-19, serve as a signal peptide directing secretion; the sequence is MKFTTPISLISLFVSSALA. 2 disulfide bridges follow: Cys-53/Cys-90 and Cys-93/Cys-148.

It belongs to the cerato-platanin family.

The protein localises to the secreted. This chain is Allergen Asp f 15, found in Aspergillus fumigatus (strain ATCC MYA-4609 / CBS 101355 / FGSC A1100 / Af293) (Neosartorya fumigata).